A 108-amino-acid polypeptide reads, in one-letter code: Insertion element IS6110 uncharacterized 12.0 kDa protein (108 aa).

This sequence belongs to the transposase 8 family.

The sequence is that of Insertion element IS6110 uncharacterized 12.0 kDa protein from Mycobacterium bovis (strain ATCC BAA-935 / AF2122/97).